A 150-amino-acid polypeptide reads, in one-letter code: Putative solute carrier family 19 member 4 (150 aa).

Residues 118-137 are disordered; the sequence is PSVREGACNEKSTENKKPQD. A compositionally biased stretch (basic and acidic residues) spans 124-136; the sequence is ACNEKSTENKKPQ.

Belongs to the reduced folate carrier (RFC) transporter (TC 2.A.48) family.

This is Putative solute carrier family 19 member 4 from Homo sapiens (Human).